A 121-amino-acid polypeptide reads, in one-letter code: Large ribosomal subunit protein uL14 (121 aa).

The protein belongs to the universal ribosomal protein uL14 family. In terms of assembly, part of the 50S ribosomal subunit. Forms a cluster with proteins L3 and L19. In the 70S ribosome, L14 and L19 interact and together make contacts with the 16S rRNA in bridges B5 and B8.

Binds to 23S rRNA. Forms part of two intersubunit bridges in the 70S ribosome. The polypeptide is Large ribosomal subunit protein uL14 (Aquifex pyrophilus).